Consider the following 214-residue polypeptide: Dimethylamine corrinoid protein 2 (214 aa).

Residues 1–91 (MATKEELIQE…DMPAGAATKK (91 aa)) enclose the B12-binding N-terminal domain. The 123-residue stretch at 92 to 214 (LGVIVNGTVE…AVAKAKELLL (123 aa)) folds into the B12-binding domain. Histidine 105 provides a ligand contact to methylcob(III)alamin.

It belongs to the methylamine corrinoid protein family.

The protein operates within one-carbon metabolism; methanogenesis from dimethylamine. Acts as a methyl group carrier between MtbB and MtbA. The protein is Dimethylamine corrinoid protein 2 (mtbC2) of Methanosarcina mazei (strain ATCC BAA-159 / DSM 3647 / Goe1 / Go1 / JCM 11833 / OCM 88) (Methanosarcina frisia).